Consider the following 434-residue polypeptide: D-amino acid dehydrogenase (434 aa).

3 to 17 (VIVLGSGVIGTTTAY) is an FAD binding site.

It belongs to the DadA oxidoreductase family. Requires FAD as cofactor.

It carries out the reaction a D-alpha-amino acid + A + H2O = a 2-oxocarboxylate + AH2 + NH4(+). The protein operates within amino-acid degradation; D-alanine degradation; NH(3) and pyruvate from D-alanine: step 1/1. Functionally, oxidative deamination of D-amino acids. In Bordetella petrii (strain ATCC BAA-461 / DSM 12804 / CCUG 43448), this protein is D-amino acid dehydrogenase.